The sequence spans 99 residues: RNA-binding protein HI_1333 (99 aa).

The region spanning 2–98 (TTLSTKQKQF…SEEAKIQLPR (97 aa)) is the CRM domain.

The sequence is that of RNA-binding protein HI_1333 from Haemophilus influenzae (strain ATCC 51907 / DSM 11121 / KW20 / Rd).